Reading from the N-terminus, the 235-residue chain is Transmembrane protein 176A (235 aa).

Residue S38 is modified to Phosphoserine. 4 helical membrane passes run 55 to 75, 86 to 106, 113 to 133, and 193 to 213; these read VASWVMQIVLGILSAVLGGFF, SGAAIWTGAVAVLAGAAAFIY, YWALLRTLLTLAAFSTAIAAL, and AMLLGVWILLLLASLTPLWLY.

Belongs to the TMEM176 family. As to quaternary structure, interacts with MCOLN2.

It localises to the membrane. This Homo sapiens (Human) protein is Transmembrane protein 176A (TMEM176A).